We begin with the raw amino-acid sequence, 424 residues long: Tyrosine--tRNA ligase (424 aa).

L-tyrosine is bound at residue tyrosine 37. A 'HIGH' region motif is present at residues 42–51 (PTADSLHLGH). Residues tyrosine 174 and glutamine 178 each coordinate L-tyrosine. Residues 234-238 (KFGKT) carry the 'KMSKS' region motif. Lysine 237 serves as a coordination point for ATP. Positions 357 to 414 (TGLIDALVASGLAKSKSEARTFIQSGSVAINGNKAEALDHAIGGDELLYGRFTILRRG) constitute an S4 RNA-binding domain.

It belongs to the class-I aminoacyl-tRNA synthetase family. TyrS type 1 subfamily. In terms of assembly, homodimer.

The protein resides in the cytoplasm. The enzyme catalyses tRNA(Tyr) + L-tyrosine + ATP = L-tyrosyl-tRNA(Tyr) + AMP + diphosphate + H(+). Its function is as follows. Catalyzes the attachment of tyrosine to tRNA(Tyr) in a two-step reaction: tyrosine is first activated by ATP to form Tyr-AMP and then transferred to the acceptor end of tRNA(Tyr). This chain is Tyrosine--tRNA ligase, found in Dechloromonas aromatica (strain RCB).